A 489-amino-acid chain; its full sequence is Betaine aldehyde dehydrogenase (489 aa).

K(+) contacts are provided by T26 and D93. Position 150–152 (150–152) interacts with NAD(+); the sequence is GAW. The active-site Charge relay system is the K162. An NAD(+)-binding site is contributed by 176-179; sequence KPSE. V180 contributes to the K(+) binding site. 229–232 is an NAD(+) binding site; that stretch reads GVET. A K(+)-binding site is contributed by L245. Catalysis depends on E251, which acts as the Proton acceptor. NAD(+) contacts are provided by G253, C285, and E386. C285 acts as the Nucleophile in catalysis. C285 carries the cysteine sulfenic acid (-SOH) modification. Positions 456 and 459 each coordinate K(+). E463 functions as the Charge relay system in the catalytic mechanism.

This sequence belongs to the aldehyde dehydrogenase family. As to quaternary structure, dimer of dimers. It depends on K(+) as a cofactor.

The catalysed reaction is betaine aldehyde + NAD(+) + H2O = glycine betaine + NADH + 2 H(+). Its pathway is amine and polyamine biosynthesis; betaine biosynthesis via choline pathway; betaine from betaine aldehyde: step 1/1. In terms of biological role, involved in the biosynthesis of the osmoprotectant glycine betaine. Catalyzes the irreversible oxidation of betaine aldehyde to the corresponding acid. The chain is Betaine aldehyde dehydrogenase from Burkholderia orbicola (strain AU 1054).